Reading from the N-terminus, the 780-residue chain is Myosin heavy chain kinase C (780 aa).

Positions 40–243 (IGDDLKPKWT…VCDFLKLKPI (204 aa)) constitute an Alpha-type protein kinase domain. The tract at residues 310-495 (RIRAQQQQKS…MEQTPDRSEF (186 aa)) is disordered. Residues 337–350 (QQSPSSPTSKPVPQ) are compositionally biased toward low complexity. Positions 353 to 376 (KTPSQSNVVNKSPVSPPKENSNVK) are enriched in polar residues. Positions 380–436 (DNINNNNSSISSNNDNSNNNNNNNDNINNSSNSSSVNSNSSSVSSSSSSSSSSSSSS) are enriched in low complexity. The segment covering 437-450 (TTNAAPISIQVSRN) has biased composition (polar residues). The span at 458 to 488 (IQPSSAAASASSTSSSNVPTPESTSTSSMEQ) shows a compositional bias: low complexity. 6 WD repeats span residues 507–546 (DTVRGLQSECITGDSLRLYSGSNDGQIGVWDAVELKHVTN), 549–589 (AHGK…TIKE), 591–628 (KESNEVNTIFIQDNLLYTGCNDKTVKVWDMRSYECVKT), 631–668 (GHTRAIKSVCAMGNLLFSGSNDQQIYVWNLATGTILTN), 671–708 (GHEGWVKTLYAHNNMLYSGSHDETIRIWDLKTTRCVNT), and 748–780 (NTRSSILCLWRNQNQLFTGSLASNLKVWSWDKM).

The protein belongs to the protein kinase superfamily. Alpha-type protein kinase family. ALPK subfamily. Interacts with myosin II heavy chain (mhcA). Autophosphorylated in vitro.

Its subcellular location is the cytoplasm. It localises to the cell cortex. It is found in the membrane. The protein localises to the cleavage furrow. The enzyme catalyses L-threonyl-[myosin heavy-chain] + ATP = O-phospho-L-threonyl-[myosin heavy-chain] + ADP + H(+). Its function is as follows. Phosphorylates threonine at 'Thr-1823', 'Thr-1833' and 'Thr-2029' in the C-terminal tail region of myosin II heavy chain (mhcA). This phosphorylation is critical in actin-activated ATPase activity of the myosin and regulating the assembly and disassembly of myosin II filament. In vitro, catalytic domain phosphorylates mhcA, myelin basic protein, myosin regulatory light chain, casein and caldesmon. Drives the disassembly of myosin II filaments for efficient cytokinesis and recycling of myosin II that occurs during late cytokinesis. Can be activated in vitro by autophosphorylation. The protein is Myosin heavy chain kinase C (mhkC) of Dictyostelium discoideum (Social amoeba).